A 338-amino-acid polypeptide reads, in one-letter code: MTGKIKIGINGFGRIGRLVARVALARDDVELVAVNDPFITTDYMTYMFKYDTVHGQWKHHELKVKDEKTLLFGEKPVTVFGCRNPEEIPWGETGAEFVVESTGVFTTKEKASAHLKGGAKKVVISAPSADAPMFVVGVNHTEYKSDIDIVSNASCTTNCLAPLAKVINDRFGIVEGLMTTVHAMTATQKTVDGPSSKDWRGGRAASFNIIPSSTGAAKAVGKVLPALNGKLTGMAFRVPTVDVSVVGLTVRLEKKATYADIKAAIKEESEGKLKGILGYTEDDVVSTDFIGDNRSSIFDAKAGIALNDNCVKLVSWYDNEWGYSSRVVDLIVHMSKTQ.

Residues 14–15 (RI), aspartate 36, and arginine 83 contribute to the NAD(+) site. Residues 154 to 156 (SCT), threonine 185, 214 to 215 (TG), and arginine 237 contribute to the D-glyceraldehyde 3-phosphate site. Cysteine 155 (nucleophile) is an active-site residue. Residue asparagine 319 coordinates NAD(+).

The protein belongs to the glyceraldehyde-3-phosphate dehydrogenase family. As to quaternary structure, homotetramer.

The protein resides in the cytoplasm. The enzyme catalyses D-glyceraldehyde 3-phosphate + phosphate + NAD(+) = (2R)-3-phospho-glyceroyl phosphate + NADH + H(+). It participates in carbohydrate degradation; glycolysis; pyruvate from D-glyceraldehyde 3-phosphate: step 1/5. Functionally, key enzyme in glycolysis that catalyzes the first step of the pathway by converting D-glyceraldehyde 3-phosphate (G3P) into 3-phospho-D-glyceroyl phosphate. Essential for the maintenance of cellular ATP levels and carbohydrate metabolism. In Ranunculus acris (Meadow buttercup), this protein is Glyceraldehyde-3-phosphate dehydrogenase, cytosolic (GAPC).